Here is a 200-residue protein sequence, read N- to C-terminus: Imidazoleglycerol-phosphate dehydratase (200 aa).

This sequence belongs to the imidazoleglycerol-phosphate dehydratase family.

It localises to the cytoplasm. The catalysed reaction is D-erythro-1-(imidazol-4-yl)glycerol 3-phosphate = 3-(imidazol-4-yl)-2-oxopropyl phosphate + H2O. It functions in the pathway amino-acid biosynthesis; L-histidine biosynthesis; L-histidine from 5-phospho-alpha-D-ribose 1-diphosphate: step 6/9. In Chlorobium luteolum (strain DSM 273 / BCRC 81028 / 2530) (Pelodictyon luteolum), this protein is Imidazoleglycerol-phosphate dehydratase.